A 476-amino-acid chain; its full sequence is Proline--tRNA ligase 2 (476 aa).

This sequence belongs to the class-II aminoacyl-tRNA synthetase family. ProS type 3 subfamily. Homodimer.

The protein localises to the cytoplasm. The catalysed reaction is tRNA(Pro) + L-proline + ATP = L-prolyl-tRNA(Pro) + AMP + diphosphate. In terms of biological role, catalyzes the attachment of proline to tRNA(Pro) in a two-step reaction: proline is first activated by ATP to form Pro-AMP and then transferred to the acceptor end of tRNA(Pro). In Bacillus cereus (strain ATCC 10987 / NRS 248), this protein is Proline--tRNA ligase 2.